We begin with the raw amino-acid sequence, 794 residues long: Ent-copalyl diphosphate synthase 2 (794 aa).

A chloroplast-targeting transit peptide spans 1 to 35; sequence MSSSSNVTSLPRLTTAGGVFPREMVRVHSSCNILR. Residue Lys-238 coordinates substrate. Mg(2+) contacts are provided by Asp-369 and Asp-371. A DXDD motif motif is present at residues 369 to 372; it reads DVDD. Lys-455 lines the substrate pocket.

This sequence belongs to the terpene synthase family. Tpsc subfamily. The cofactor is Mg(2+). In terms of tissue distribution, expressed in leaves.

The protein resides in the plastid. Its subcellular location is the chloroplast. It catalyses the reaction (2E,6E,10E)-geranylgeranyl diphosphate = ent-copalyl diphosphate. The protein operates within secondary metabolite biosynthesis; terpenoid biosynthesis. Involved in the biosynthesis of ent-kaurene diterpenoids natural products such as oridonin, miltiradiene, eriocalyxin B and nezukol, known to exhibit antitumor, anti-inflammatory and antibacterial activities. Catalyzes the conversion of (2E,6E,10E)-geranylgeranyl diphosphate (GGPP) to ent-copalyl diphosphate (ent-CPP). This chain is Ent-copalyl diphosphate synthase 2, found in Isodon eriocalyx (Plectranthus eriocalyx).